Reading from the N-terminus, the 487-residue chain is 3-octaprenyl-4-hydroxybenzoate carboxy-lyase (487 aa).

N172 lines the Mn(2+) pocket. Residues 175-177 (IYR), 189-191 (RWL), and 194-195 (RG) each bind prenylated FMN. Residue E238 participates in Mn(2+) binding. The Proton donor role is filled by D287.

This sequence belongs to the UbiD family. As to quaternary structure, homohexamer. It depends on prenylated FMN as a cofactor. Mn(2+) is required as a cofactor.

It localises to the cell membrane. The catalysed reaction is a 4-hydroxy-3-(all-trans-polyprenyl)benzoate + H(+) = a 2-(all-trans-polyprenyl)phenol + CO2. It participates in cofactor biosynthesis; ubiquinone biosynthesis. In terms of biological role, catalyzes the decarboxylation of 3-octaprenyl-4-hydroxy benzoate to 2-octaprenylphenol, an intermediate step in ubiquinone biosynthesis. The chain is 3-octaprenyl-4-hydroxybenzoate carboxy-lyase from Nitrosococcus oceani (strain ATCC 19707 / BCRC 17464 / JCM 30415 / NCIMB 11848 / C-107).